A 239-amino-acid chain; its full sequence is RNA polymerase sigma factor FliA (239 aa).

Positions 16–88 are sigma-70 factor domain-2; that stretch reads LWQRYVPLVR…MLDELRSRDW (73 aa). Residues 43–46 carry the Interaction with polymerase core subunit RpoC motif; sequence DLLQ. The sigma-70 factor domain-3 stretch occupies residues 96–166; that stretch reads NAREVAQAMG…IELVTEEHQQ (71 aa). The interval 185-233 is sigma-70 factor domain-4; the sequence is AIESLPEREQLVLTLYYQEELNLKEIGAVLEVGESRVSQLHSQAIKRLR. Positions 207–226 form a DNA-binding region, H-T-H motif; sequence LKEIGAVLEVGESRVSQLHS.

Belongs to the sigma-70 factor family. FliA subfamily.

It localises to the cytoplasm. In terms of biological role, sigma factors are initiation factors that promote the attachment of RNA polymerase to specific initiation sites and are then released. This sigma factor controls the expression of flagella-related genes. The sequence is that of RNA polymerase sigma factor FliA from Salmonella typhi.